The primary structure comprises 198 residues: GTP cyclohydrolase-2 (198 aa).

52-56 (RMHSE) provides a ligand contact to GTP. Cys-57, Cys-68, and Cys-70 together coordinate Zn(2+). Residues Gln-73, 94 to 96 (EGR), and Thr-116 each bind GTP. Asp-128 (proton acceptor) is an active-site residue. Catalysis depends on Arg-130, which acts as the Nucleophile. Thr-151 and Lys-156 together coordinate GTP.

The protein belongs to the GTP cyclohydrolase II family. Requires Zn(2+) as cofactor.

It catalyses the reaction GTP + 4 H2O = 2,5-diamino-6-hydroxy-4-(5-phosphoribosylamino)-pyrimidine + formate + 2 phosphate + 3 H(+). The protein operates within cofactor biosynthesis; riboflavin biosynthesis; 5-amino-6-(D-ribitylamino)uracil from GTP: step 1/4. Catalyzes the conversion of GTP to 2,5-diamino-6-ribosylamino-4(3H)-pyrimidinone 5'-phosphate (DARP), formate and pyrophosphate. In Vibrio cholerae serotype O1 (strain ATCC 39315 / El Tor Inaba N16961), this protein is GTP cyclohydrolase-2.